The following is a 399-amino-acid chain: MRVTVSIIKADVGGFPGHAHVHPKMLEYAAAKLKEAQKRGVIIDYFVYNVGDDISLLMTHTKGEDNKDIHGLAWETFKEVTDQIAKRFKLYGAGQDLLKDAFSGNIRGMGPQVAEMEFEERPSEPIIAFAADKTEPGAFNLPLYKMFADPFTTAGLVIDPSMHEGFIFEVLDVVEHKVYLLKTPEDAYSLLGLIGTTGRYIIRKVFRRADGAPAAANSVERLSLIAGRYVGKDDPVLLVRAQSGLPAVGEVLEAFAHPHLVHGWMRGSHAGPLMPARFISVDPERRIAIGPKMTRFDGPPKVGALGFQLHEGYLEGGVDLFDDPAFDYVRQTAAQIADYIRRMGPFQPHRLPPEEMEYTALPKILAKVKPYPADQYEKDRKKYIEAVVKGAKVEESQHD.

Asp11 acts as the Proton acceptor; for FBP phosphatase activity in catalysis. Mg(2+) contacts are provided by Asp11, His18, Asp52, and Asp53. His18 contacts beta-D-fructose 1,6-bisphosphate. His18 is a binding site for dihydroxyacetone phosphate. Residue Tyr91 coordinates beta-D-fructose 1,6-bisphosphate. Gln95 is a binding site for Mg(2+). A beta-D-fructose 1,6-bisphosphate-binding site is contributed by 104–105; the sequence is GN. Residue Asp132 participates in Mg(2+) binding. Lys133 contributes to the beta-D-fructose 1,6-bisphosphate binding site. Residue Lys133 coordinates dihydroxyacetone phosphate. Tyr229 (proton donor/acceptor; for FBP aldolase activity) is an active-site residue. Mg(2+)-binding residues include Lys232, Asp233, and Asp234. Lys232 serves as the catalytic Schiff-base intermediate with DHAP; for FBP aldolase activity. Beta-D-fructose 1,6-bisphosphate is bound by residues 242–243, Arg266, Asp297, and Tyr358; that span reads QS. Dihydroxyacetone phosphate-binding residues include Arg266 and Asp297.

The protein belongs to the FBP aldolase/phosphatase family. In terms of assembly, homooctamer; dimer of tetramers. Mg(2+) is required as a cofactor.

It catalyses the reaction beta-D-fructose 1,6-bisphosphate + H2O = beta-D-fructose 6-phosphate + phosphate. The enzyme catalyses beta-D-fructose 1,6-bisphosphate = D-glyceraldehyde 3-phosphate + dihydroxyacetone phosphate. It participates in carbohydrate biosynthesis; gluconeogenesis. In terms of biological role, catalyzes two subsequent steps in gluconeogenesis: the aldol condensation of dihydroxyacetone phosphate (DHAP) and glyceraldehyde-3-phosphate (GA3P) to fructose-1,6-bisphosphate (FBP), and the dephosphorylation of FBP to fructose-6-phosphate (F6P). The chain is Fructose-1,6-bisphosphate aldolase/phosphatase from Pyrobaculum neutrophilum (strain DSM 2338 / JCM 9278 / NBRC 100436 / V24Sta) (Thermoproteus neutrophilus).